A 185-amino-acid chain; its full sequence is Ribosome-recycling factor (185 aa).

It belongs to the RRF family.

It is found in the cytoplasm. Functionally, responsible for the release of ribosomes from messenger RNA at the termination of protein biosynthesis. May increase the efficiency of translation by recycling ribosomes from one round of translation to another. This Actinobacillus succinogenes (strain ATCC 55618 / DSM 22257 / CCUG 43843 / 130Z) protein is Ribosome-recycling factor.